The primary structure comprises 163 residues: Nucleotide-binding protein KPK_4305 (163 aa).

Belongs to the YajQ family.

In terms of biological role, nucleotide-binding protein. The chain is Nucleotide-binding protein KPK_4305 from Klebsiella pneumoniae (strain 342).